The primary structure comprises 611 residues: Probable cysteine desulfurase 1 (611 aa).

Positions 1-208 (MRATQLYAAS…HEMVDVFDIQ (208 aa)) are cargo-loading domain. Lysine 428 is modified (N6-(pyridoxal phosphate)lysine). Residue cysteine 566 is the Cysteine persulfide intermediate of the active site.

Belongs to the class-V pyridoxal-phosphate-dependent aminotransferase family. Csd subfamily. As to quaternary structure, there are 1-2 copies of this protein in each type 2A encapsulin shell. The cofactor is pyridoxal 5'-phosphate.

Its subcellular location is the encapsulin nanocompartment. The catalysed reaction is (sulfur carrier)-H + L-cysteine = (sulfur carrier)-SH + L-alanine. In terms of biological role, cargo protein of a type 2A encapsulin nanocompartment involved in sulfur metabolism. Cysteine desulfurases mobilize the sulfur from L-cysteine to yield L-alanine, an essential step in sulfur metabolism for biosynthesis of a variety of sulfur-containing biomolecules. The protein is Probable cysteine desulfurase 1 of Mycobacterium leprae (strain TN).